A 190-amino-acid chain; its full sequence is Nucleoside triphosphate pyrophosphatase (190 aa).

Aspartate 69 functions as the Proton acceptor in the catalytic mechanism.

The protein belongs to the Maf family. It depends on a divalent metal cation as a cofactor.

The protein resides in the cytoplasm. It catalyses the reaction a ribonucleoside 5'-triphosphate + H2O = a ribonucleoside 5'-phosphate + diphosphate + H(+). The enzyme catalyses a 2'-deoxyribonucleoside 5'-triphosphate + H2O = a 2'-deoxyribonucleoside 5'-phosphate + diphosphate + H(+). Its function is as follows. Nucleoside triphosphate pyrophosphatase. May have a dual role in cell division arrest and in preventing the incorporation of modified nucleotides into cellular nucleic acids. In Helicobacter pylori (strain HPAG1), this protein is Nucleoside triphosphate pyrophosphatase.